We begin with the raw amino-acid sequence, 159 residues long: Sumo-conjugating enzyme ubc9 (159 aa).

A UBC core domain is found at 4–157 (ISSARLSEER…VKAQSKVYPP (154 aa)). Cys-93 (glycyl thioester intermediate) is an active-site residue.

This sequence belongs to the ubiquitin-conjugating enzyme family.

The protein resides in the nucleus. It participates in protein modification; protein sumoylation. Functionally, accepts the ubiquitin-like protein sumo from the E1 complex and catalyzes its covalent attachment to other proteins with the help of an E3 ligase. This is Sumo-conjugating enzyme ubc9 (ubc9) from Dictyostelium discoideum (Social amoeba).